Consider the following 78-residue polypeptide: Large ribosomal subunit protein bL28 (78 aa).

This sequence belongs to the bacterial ribosomal protein bL28 family.

The polypeptide is Large ribosomal subunit protein bL28 (Ruthia magnifica subsp. Calyptogena magnifica).